Here is a 416-residue protein sequence, read N- to C-terminus: MSLSSKLTVKDLSLAGKRVFIRVDFNVPLDGKTITSNQRIVAALPTIKYVLEQGPKAVVLASHLGRPNGERNEKYSLAPVAAELEKLLGQKVNFLDDCVGEHVTAAVNGAAAGSVFLLENLRFHIEEEGSRKVDGEKVKASAEDVQKFRQGLMSLADVYVNDAFGTAHRAHSSMVGFELPERAGGFLLSRELEYFSKALENPTRPFLAILGGAKVADKIQLIDNLLDKVDSIVIGGGMAFTFKKVLENMEIGNSIYDKAGAEIVPKLAEKAKKNGVKIVLPVDFVIGDDFSQDANTKIVSASEGIPSGWEGLDCGPESRKLFSETIASAKTIVWNGPPGVFEIPKFSEGTQAMLAAAVKASEAGSTVIIGGGDTATVAKKYGVVEKISHVSTGGGASLELLEGKDLPGVTFLSSKQ.

14 residues coordinate (2R)-3-phosphoglycerate: Val-23, Asp-24, Phe-25, Asn-26, Gln-38, Arg-39, Ser-62, His-63, Gly-65, Arg-66, Leu-121, Arg-122, His-168, and Arg-169. Position 212 (Gly-212) interacts with ADP. Gly-212 is a binding site for CDP. AMP is bound by residues Ala-213 and Lys-214. Ala-213 provides a ligand contact to ATP. Ala-213 contributes to the Mg(2+) binding site. The Mg(2+) site is built by Ala-216 and Asp-217. Asp-217 serves as a coordination point for CDP. Residue Lys-218 participates in AMP binding. Lys-218 serves as a coordination point for ATP. Position 236 (Gly-236) interacts with ADP. Gly-236 lines the CDP pocket. Gly-237 and Gly-311 together coordinate AMP. ATP-binding residues include Gly-237 and Gly-311. Gly-336 and Phe-341 together coordinate CDP. Phe-341 provides a ligand contact to ADP. Residue Glu-342 coordinates AMP. 3 residues coordinate ATP: Glu-342, Asp-373, and Thr-374. Asp-373 is a Mg(2+) binding site.

Belongs to the phosphoglycerate kinase family. As to quaternary structure, monomer. Mg(2+) is required as a cofactor.

Its subcellular location is the cytoplasm. It is found in the mitochondrion. The catalysed reaction is (2R)-3-phosphoglycerate + ATP = (2R)-3-phospho-glyceroyl phosphate + ADP. It functions in the pathway carbohydrate degradation; glycolysis; pyruvate from D-glyceraldehyde 3-phosphate: step 2/5. Catalyzes one of the two ATP producing reactions in the glycolytic pathway via the reversible conversion of 1,3-diphosphoglycerate to 3-phosphoglycerate. Both L- and D- forms of purine and pyrimidine nucleotides can be used as substrates, but the activity is much lower on pyrimidines. Negatively regulates the biosynthesis of acetyl-CoA from pyruvate in the mitochondrion. This chain is Phosphoglycerate kinase (PGK1), found in Eremothecium gossypii (strain ATCC 10895 / CBS 109.51 / FGSC 9923 / NRRL Y-1056) (Yeast).